The sequence spans 205 residues: Ferritin heavy chain (205 aa).

The N-terminal stretch at 1-19 (MVKLIASLLLLAVVAQAYG) is a signal peptide. A Ferritin-like diiron domain is found at 35 to 190 (VDMKDACIKG…GKLTTLKKMM (156 aa)). Cysteines 41 and 150 form a disulfide. The Fe cation site is built by Glu52, Glu87, His90, Glu136, and Gln172.

This sequence belongs to the ferritin family. As to quaternary structure, oligomer of 12 light (L) chains and 12 heavy (H) chains; L and H chains are disulfide-linked. The functional molecule forms a roughly spherical shell with a diameter of 12 nm and contains a central cavity into which the insoluble ferric iron core is deposited. As to expression, expressed in hemolymph and gut (at protein level). Expressed in the head (at protein level). Expressed in thorax and abdomen.

The protein localises to the golgi apparatus. It localises to the secreted. It catalyses the reaction 4 Fe(2+) + O2 + 4 H(+) = 4 Fe(3+) + 2 H2O. Functionally, stores iron in a soluble, non-toxic, readily available form. Important for iron homeostasis. Iron is taken up in the ferrous form and deposited as ferric hydroxides after oxidation. Ferritin is composed of a heavy (H) chain which is responsible for the oxidation and uptake of ferrous iron, and a light (L) chain which facilitates the nucleation of the ferrihydrite iron core. Required for dietary iron absorption in the midgut. Involved in tissue iron detoxification by exporting excess iron. Functions as an antioxidant and protects the developing organs from cell-mediated ferroptosis. Required for embryo and larval development. Plays a role in blood cell (haemocyte) differentiation in the lymph gland at the larval stage. May also store Zn(2+) and Mn(2+) and thus may play a role in zinc and manganese homeostasis. The polypeptide is Ferritin heavy chain (Drosophila melanogaster (Fruit fly)).